A 134-amino-acid polypeptide reads, in one-letter code: Cytochrome b (134 aa).

3 consecutive transmembrane segments (helical) span residues 33–53 (FGSL…FLAM), 77–98 (WLIR…FLHV), and 113–133 (WNIG…GYVL). Heme b-binding residues include H83 and H97.

This sequence belongs to the cytochrome b family. The cytochrome bc1 complex contains 11 subunits: 3 respiratory subunits (MT-CYB, CYC1 and UQCRFS1), 2 core proteins (UQCRC1 and UQCRC2) and 6 low-molecular weight proteins (UQCRH/QCR6, UQCRB/QCR7, UQCRQ/QCR8, UQCR10/QCR9, UQCR11/QCR10 and a cleavage product of UQCRFS1). This cytochrome bc1 complex then forms a dimer. The cofactor is heme b.

The protein resides in the mitochondrion inner membrane. Functionally, component of the ubiquinol-cytochrome c reductase complex (complex III or cytochrome b-c1 complex) that is part of the mitochondrial respiratory chain. The b-c1 complex mediates electron transfer from ubiquinol to cytochrome c. Contributes to the generation of a proton gradient across the mitochondrial membrane that is then used for ATP synthesis. In Sorex shinto sadonis (Sado shrew), this protein is Cytochrome b (MT-CYB).